The chain runs to 394 residues: NADH-quinone oxidoreductase subunit D 2 (394 aa).

It belongs to the complex I 49 kDa subunit family. As to quaternary structure, NDH-1 is composed of 14 different subunits. Subunits NuoB, C, D, E, F, and G constitute the peripheral sector of the complex.

The protein localises to the cell membrane. The catalysed reaction is a quinone + NADH + 5 H(+)(in) = a quinol + NAD(+) + 4 H(+)(out). Functionally, NDH-1 shuttles electrons from NADH, via FMN and iron-sulfur (Fe-S) centers, to quinones in the respiratory chain. The immediate electron acceptor for the enzyme in this species is believed to be a menaquinone. Couples the redox reaction to proton translocation (for every two electrons transferred, four hydrogen ions are translocated across the cytoplasmic membrane), and thus conserves the redox energy in a proton gradient. This Streptomyces griseus subsp. griseus (strain JCM 4626 / CBS 651.72 / NBRC 13350 / KCC S-0626 / ISP 5235) protein is NADH-quinone oxidoreductase subunit D 2.